We begin with the raw amino-acid sequence, 391 residues long: AN1-type zinc finger and UBX domain-containing protein DDB_G0268260 (391 aa).

Over residues 1–16 (MQQQSPPTAPQQQQQQ) the composition is skewed to low complexity. The segment at 1–20 (MQQQSPPTAPQQQQQQQRER) is disordered. 2 AN1-type zinc fingers span residues 26–74 (DHIG…QREN) and 118–166 (APKS…IINS). Cys32, Cys37, Cys47, Cys50, Cys55, His58, His64, Cys66, Cys124, Cys129, Cys139, Cys142, Cys147, His150, His156, and Cys158 together coordinate Zn(2+). Residues 185–236 (NINNNINNNKNNNNNNNNNNNNNNNNNNNNNNNNNNNNNNNNNNNNNSNNNN) are compositionally biased toward low complexity. Residues 185-240 (NINNNINNNKNNNNNNNNNNNNNNNNNNNNNNNNNNNNNNNNNNNNNSNNNNKLIY) form a disordered region. Positions 278-356 (SSEEIGEIGI…GLLPVSTLYM (79 aa)) constitute a UBX domain.

This chain is AN1-type zinc finger and UBX domain-containing protein DDB_G0268260, found in Dictyostelium discoideum (Social amoeba).